The primary structure comprises 132 residues: NADPH-dependent 7-cyano-7-deazaguanine reductase (132 aa).

The Thioimide intermediate role is filled by Cys48. The Proton donor role is filled by Asp55. Substrate-binding positions include 70–72 (LEL) and 89–90 (ME).

It belongs to the GTP cyclohydrolase I family. QueF type 1 subfamily.

The protein resides in the cytoplasm. The catalysed reaction is 7-aminomethyl-7-carbaguanine + 2 NADP(+) = 7-cyano-7-deazaguanine + 2 NADPH + 3 H(+). It functions in the pathway tRNA modification; tRNA-queuosine biosynthesis. Functionally, catalyzes the NADPH-dependent reduction of 7-cyano-7-deazaguanine (preQ0) to 7-aminomethyl-7-deazaguanine (preQ1). The polypeptide is NADPH-dependent 7-cyano-7-deazaguanine reductase (Elusimicrobium minutum (strain Pei191)).